Here is a 100-residue protein sequence, read N- to C-terminus: NADH-quinone oxidoreductase subunit K (100 aa).

3 helical membrane passes run 4 to 24 (LQHG…GLLI), 28 to 48 (LLFM…AFVV), and 60 to 80 (VMYI…LALL).

This sequence belongs to the complex I subunit 4L family. As to quaternary structure, NDH-1 is composed of 13 different subunits. Subunits NuoA, H, J, K, L, M, N constitute the membrane sector of the complex.

It localises to the cell inner membrane. The catalysed reaction is a quinone + NADH + 5 H(+)(in) = a quinol + NAD(+) + 4 H(+)(out). NDH-1 shuttles electrons from NADH, via FMN and iron-sulfur (Fe-S) centers, to quinones in the respiratory chain. The immediate electron acceptor for the enzyme in this species is believed to be ubiquinone. Couples the redox reaction to proton translocation (for every two electrons transferred, four hydrogen ions are translocated across the cytoplasmic membrane), and thus conserves the redox energy in a proton gradient. This chain is NADH-quinone oxidoreductase subunit K, found in Edwardsiella ictaluri (strain 93-146).